The chain runs to 127 residues: Fumarate reductase subunit C (127 aa).

The next 3 helical transmembrane spans lie at 30–50 (ATVL…GSLV), 67–87 (VVIA…HTFF), and 107–127 (IIVL…LIVV).

The protein belongs to the FrdC family. Part of an enzyme complex containing four subunits: a flavoprotein (FrdA), an iron-sulfur protein (FrdB), and two hydrophobic anchor proteins (FrdC and FrdD).

The protein resides in the cell inner membrane. Its function is as follows. Anchors the catalytic components of the fumarate reductase complex to the cell membrane, binds quinones. In Vibrio vulnificus (strain CMCP6), this protein is Fumarate reductase subunit C.